Here is a 363-residue protein sequence, read N- to C-terminus: Flagellar P-ring protein (363 aa).

The signal sequence occupies residues 1-20 (MKKLTLVLFGMLFLASSAHA).

The protein belongs to the FlgI family. The basal body constitutes a major portion of the flagellar organelle and consists of four rings (L,P,S, and M) mounted on a central rod.

It localises to the periplasm. The protein localises to the bacterial flagellum basal body. Functionally, assembles around the rod to form the L-ring and probably protects the motor/basal body from shearing forces during rotation. The protein is Flagellar P-ring protein of Vibrio atlanticus (strain LGP32) (Vibrio splendidus (strain Mel32)).